Reading from the N-terminus, the 186-residue chain is Nucleoside diphosphate kinase, mitochondrial (186 aa).

The N-terminal 32 residues, 1–32 (MGSLFGRVAALRALLCGPRFQCLLVRPSSGGP), are a transit peptide targeting the mitochondrion. Residues Lys-44, Phe-92, Arg-120, Thr-126, Arg-137, and Asn-147 each contribute to the ATP site. His-150 serves as the catalytic Pros-phosphohistidine intermediate.

This sequence belongs to the NDK family. In terms of assembly, homohexamer. Interacts with OPA1. Interacts with CAPN8. It depends on Mg(2+) as a cofactor. In terms of tissue distribution, expressed in the base region of the oxyntic and pyloric mucosae.

It localises to the mitochondrion intermembrane space. Its subcellular location is the mitochondrion matrix. The catalysed reaction is a 2'-deoxyribonucleoside 5'-diphosphate + ATP = a 2'-deoxyribonucleoside 5'-triphosphate + ADP. The enzyme catalyses a ribonucleoside 5'-diphosphate + ATP = a ribonucleoside 5'-triphosphate + ADP. Functionally, major role in the synthesis of nucleoside triphosphates other than ATP. The ATP gamma phosphate is transferred to the NDP beta phosphate via a ping-pong mechanism, using a phosphorylated active-site intermediate. Through the catalyzed exchange of gamma-phosphate between di- and triphosphonucleosides participates in regulation of intracellular nucleotide homeostasis. Binds to anionic phospholipids, predominantly to cardiolipin; the binding inhibits its phosphotransfer activity. Acts as a mitochondria-specific NDK; its association with cardiolipin-containing mitochondrial inner membrane is coupled to respiration suggesting that ADP locally regenerated in the mitochondrion innermembrane space by its activity is directly taken up via ANT ADP/ATP translocase into the matrix space to stimulate respiratory ATP regeneration. Proposed to increase GTP-loading on dynamin-related GTPase OPA1 in mitochondria. In vitro can induce liposome cross-linking suggesting that it can cross-link inner and outer membranes to form contact sites, and promotes intermembrane migration of anionic phosphoplipids. Promotes the redistribution of cardiolipin between the mitochondrial inner membrane and outer membrane which is implicated in pro-apoptotic signaling. The polypeptide is Nucleoside diphosphate kinase, mitochondrial (Nme4) (Mus musculus (Mouse)).